The following is a 264-amino-acid chain: Undecaprenyl-diphosphatase (264 aa).

Helical transmembrane passes span 42–62, 82–102, 109–129, 146–166, 184–204, 215–235, and 243–263; these read ESLL…LVVF, TQFS…GLLF, LFGG…LLLW, AFII…RSGA, FSFL…LMSG, ILAT…TWMI, and LSWF…FAYA.

The protein belongs to the UppP family.

The protein localises to the cell membrane. It carries out the reaction di-trans,octa-cis-undecaprenyl diphosphate + H2O = di-trans,octa-cis-undecaprenyl phosphate + phosphate + H(+). Functionally, catalyzes the dephosphorylation of undecaprenyl diphosphate (UPP). Confers resistance to bacitracin. The sequence is that of Undecaprenyl-diphosphatase from Christiangramia forsetii (strain DSM 17595 / CGMCC 1.15422 / KT0803) (Gramella forsetii).